Here is a 269-residue protein sequence, read N- to C-terminus: Putative pyruvate, phosphate dikinase regulatory protein (269 aa).

An ADP-binding site is contributed by 147-154 (GLSRTSKT).

Belongs to the pyruvate, phosphate/water dikinase regulatory protein family. PDRP subfamily.

It catalyses the reaction N(tele)-phospho-L-histidyl/L-threonyl-[pyruvate, phosphate dikinase] + ADP = N(tele)-phospho-L-histidyl/O-phospho-L-threonyl-[pyruvate, phosphate dikinase] + AMP + H(+). It carries out the reaction N(tele)-phospho-L-histidyl/O-phospho-L-threonyl-[pyruvate, phosphate dikinase] + phosphate + H(+) = N(tele)-phospho-L-histidyl/L-threonyl-[pyruvate, phosphate dikinase] + diphosphate. Its function is as follows. Bifunctional serine/threonine kinase and phosphorylase involved in the regulation of the pyruvate, phosphate dikinase (PPDK) by catalyzing its phosphorylation/dephosphorylation. This chain is Putative pyruvate, phosphate dikinase regulatory protein, found in Clostridium botulinum (strain ATCC 19397 / Type A).